We begin with the raw amino-acid sequence, 101 residues long: Apolipoprotein C-II (101 aa).

Residues 1 to 22 (MGTRFLLALFLVLLVLGFEVQG) form the signal peptide. The segment at 66–74 (AVDEKLRDM) is lipid binding. Residues 78–101 (STAAVSTYAGIFTDQVLSMLRGEE) form a lipoprotein lipase cofactor region.

The protein belongs to the apolipoprotein C2 family. Proapolipoprotein C-II is synthesized as a sialic acid containing glycoprotein which is subsequently desialylated prior to its proteolytic processing. Post-translationally, proapolipoprotein C-II, the major form found in plasma undergoes proteolytic cleavage of its N-terminal hexapeptide to generate apolipoprotein C-II, which occurs as the minor form in plasma.

It is found in the secreted. Its function is as follows. Component of chylomicrons, very low-density lipoproteins (VLDL), low-density lipoproteins (LDL), and high-density lipoproteins (HDL) in plasma. Plays an important role in lipoprotein metabolism as an activator of lipoprotein lipase. Both proapolipoprotein C-II and apolipoprotein C-II can activate lipoprotein lipase. This Saimiri boliviensis boliviensis (Bolivian squirrel monkey) protein is Apolipoprotein C-II (APOC2).